Reading from the N-terminus, the 246-residue chain is tRNA (guanine-N(1)-)-methyltransferase (246 aa).

S-adenosyl-L-methionine is bound by residues glycine 117 and 137–142 (IGDYVL).

This sequence belongs to the RNA methyltransferase TrmD family. As to quaternary structure, homodimer.

The protein resides in the cytoplasm. The enzyme catalyses guanosine(37) in tRNA + S-adenosyl-L-methionine = N(1)-methylguanosine(37) in tRNA + S-adenosyl-L-homocysteine + H(+). In terms of biological role, specifically methylates guanosine-37 in various tRNAs. The sequence is that of tRNA (guanine-N(1)-)-methyltransferase from Acinetobacter baumannii (strain ACICU).